We begin with the raw amino-acid sequence, 89 residues long: Small ribosomal subunit protein uS15 (89 aa).

This sequence belongs to the universal ribosomal protein uS15 family. Part of the 30S ribosomal subunit. Forms a bridge to the 50S subunit in the 70S ribosome, contacting the 23S rRNA.

Its function is as follows. One of the primary rRNA binding proteins, it binds directly to 16S rRNA where it helps nucleate assembly of the platform of the 30S subunit by binding and bridging several RNA helices of the 16S rRNA. Functionally, forms an intersubunit bridge (bridge B4) with the 23S rRNA of the 50S subunit in the ribosome. The chain is Small ribosomal subunit protein uS15 from Lactobacillus johnsonii (strain CNCM I-12250 / La1 / NCC 533).